Here is a 481-residue protein sequence, read N- to C-terminus: Phloretin 4'-O-glucosyltransferase (481 aa).

His-16 (proton acceptor) is an active-site residue. His-16 is an an anthocyanidin binding site. Residues Gln-354, His-369, Trp-372, Asn-373, Ser-374, Glu-377, Asp-393, and Gln-394 each coordinate UDP-alpha-D-glucose.

This sequence belongs to the UDP-glycosyltransferase family. Highly expressed in young leaves, at intermediate level in mature leaves and at low levels in flowers and fruits.

It catalyses the reaction phloretin + UDP-alpha-D-glucose = trilobatin + UDP + H(+). The catalysed reaction is (2S)-naringenin + UDP-alpha-D-glucose = (2S)-naringenin 7-O-beta-D-glucoside + UDP + H(+). In terms of biological role, glycosyltransferase that possesses phloretin 4'-O-glycosyltransferase activity. Converts phloretin to trilobatin (phloretin 4'-O-glucoside), a potential antioxidant. Can convert with low efficiency phlorizin and trilobatin to their corresponding di-O-glucosides. Can convert with low efficiency naringenin to naringenin-7-O-glucoside. Can convert with low efficiency quercetin to quercetin-7-O-glucoside. The chain is Phloretin 4'-O-glucosyltransferase from Malus domestica (Apple).